We begin with the raw amino-acid sequence, 254 residues long: Thiazole synthase (254 aa).

Lys95 (schiff-base intermediate with DXP) is an active-site residue. Residues Gly156, 182 to 183 (AG), and 204 to 205 (NT) each bind 1-deoxy-D-xylulose 5-phosphate.

It belongs to the ThiG family. In terms of assembly, homotetramer. Forms heterodimers with either ThiH or ThiS.

The protein localises to the cytoplasm. It catalyses the reaction [ThiS sulfur-carrier protein]-C-terminal-Gly-aminoethanethioate + 2-iminoacetate + 1-deoxy-D-xylulose 5-phosphate = [ThiS sulfur-carrier protein]-C-terminal Gly-Gly + 2-[(2R,5Z)-2-carboxy-4-methylthiazol-5(2H)-ylidene]ethyl phosphate + 2 H2O + H(+). It participates in cofactor biosynthesis; thiamine diphosphate biosynthesis. Catalyzes the rearrangement of 1-deoxy-D-xylulose 5-phosphate (DXP) to produce the thiazole phosphate moiety of thiamine. Sulfur is provided by the thiocarboxylate moiety of the carrier protein ThiS. In vitro, sulfur can be provided by H(2)S. The protein is Thiazole synthase of Shewanella piezotolerans (strain WP3 / JCM 13877).